Consider the following 265-residue polypeptide: Apolipoprotein A-I (265 aa).

Residues Met-1–Ala-18 form the signal peptide. 2 repeat units span residues Leu-67 to Gly-88 and Pro-89 to Asn-110. The 10 X approximate tandem repeats stretch occupies residues Leu-67 to Gln-265. The residue at position 109 (Met-109) is a Methionine sulfoxide. The 3; half-length repeat unit spans residues Lys-111–Gln-121. 5 tandem repeats follow at residues Pro-122–Val-142, Pro-144–Thr-165, Pro-166–Ala-187, Pro-188–Gly-209, and Ser-210–Lys-230. The 9; half-length repeat unit spans residues Pro-231–Leu-241. Residues Pro-242–Gln-265 form repeat 10.

It belongs to the apolipoprotein A1/A4/E family. Homodimer. Interacts with APOA1BP and CLU. Component of a sperm activating protein complex (SPAP), consisting of APOA1, an immunoglobulin heavy chain, an immunoglobulin light chain and albumin. Interacts with NDRG1. Interacts with SCGB3A2. Interacts with NAXE and YJEFN3. Glycosylated. In terms of processing, palmitoylated. Post-translationally, phosphorylation sites are present in the extracellular medium. Major protein of plasma HDL, also found in chylomicrons.

It is found in the secreted. Functionally, participates in the reverse transport of cholesterol from tissues to the liver for excretion by promoting cholesterol efflux from tissues and by acting as a cofactor for the lecithin cholesterol acyltransferase (LCAT). As part of the SPAP complex, activates spermatozoa motility. The chain is Apolipoprotein A-I (APOA1) from Physeter macrocephalus (Sperm whale).